The following is a 59-amino-acid chain: Protein translocase subunit SecE (59 aa).

Residues 33 to 53 traverse the membrane as a helical segment; that stretch reads GAGIALVGLLGFIIFAVMTFV.

The protein belongs to the SecE/SEC61-gamma family. In terms of assembly, component of the Sec protein translocase complex. Heterotrimer consisting of SecY (alpha), SecG (beta) and SecE (gamma) subunits. The heterotrimers can form oligomers, although 1 heterotrimer is thought to be able to translocate proteins. Interacts with the ribosome. May interact with SecDF, and other proteins may be involved.

Its subcellular location is the cell membrane. Its function is as follows. Essential subunit of the Sec protein translocation channel SecYEG. Clamps together the 2 halves of SecY. May contact the channel plug during translocation. The sequence is that of Protein translocase subunit SecE from Haloarcula marismortui (strain ATCC 43049 / DSM 3752 / JCM 8966 / VKM B-1809) (Halobacterium marismortui).